The following is a 378-amino-acid chain: Glutamate 5-kinase (378 aa).

Residue Lys-20 participates in ATP binding. Ser-60, Asp-147, and Asn-159 together coordinate substrate. ATP contacts are provided by residues 179-180 and 221-227; these read TD and TGGMLTK. In terms of domain architecture, PUA spans 286–364; sequence RGRVVLDAGA…SQIARILGSM (79 aa).

This sequence belongs to the glutamate 5-kinase family.

The protein resides in the cytoplasm. It catalyses the reaction L-glutamate + ATP = L-glutamyl 5-phosphate + ADP. The protein operates within amino-acid biosynthesis; L-proline biosynthesis; L-glutamate 5-semialdehyde from L-glutamate: step 1/2. Its function is as follows. Catalyzes the transfer of a phosphate group to glutamate to form L-glutamate 5-phosphate. The protein is Glutamate 5-kinase of Bordetella petrii (strain ATCC BAA-461 / DSM 12804 / CCUG 43448).